The chain runs to 359 residues: 3-isopropylmalate dehydrogenase (359 aa).

74-85 (GPKWGTGSVRPE) contacts NAD(+). Substrate is bound by residues Arg-92, Arg-102, Arg-131, and Asp-220. Positions 220, 245, and 249 each coordinate Mg(2+). 284–295 (GSAPDLPANKVN) is a binding site for NAD(+).

The protein belongs to the isocitrate and isopropylmalate dehydrogenases family. Homodimer. Mg(2+) serves as cofactor. Requires Mn(2+) as cofactor.

It is found in the cytoplasm. It carries out the reaction (2R,3S)-3-isopropylmalate + NAD(+) = 4-methyl-2-oxopentanoate + CO2 + NADH. Its pathway is amino-acid biosynthesis; L-leucine biosynthesis; L-leucine from 3-methyl-2-oxobutanoate: step 3/4. Catalyzes the oxidation of 3-carboxy-2-hydroxy-4-methylpentanoate (3-isopropylmalate) to 3-carboxy-4-methyl-2-oxopentanoate. The product decarboxylates to 4-methyl-2 oxopentanoate. The protein is 3-isopropylmalate dehydrogenase (LEU2) of Kluyveromyces marxianus (Yeast).